A 701-amino-acid chain; its full sequence is Centrosomal protein of 83 kDa (701 aa).

Over residues 1 to 14 the composition is skewed to polar residues; it reads MVVSTFTDMDTFPN. The interval 1 to 23 is disordered; it reads MVVSTFTDMDTFPNNFPPGGDSG. Coiled coils occupy residues 40 to 634 and 665 to 698; these read LRCE…SLIL and HMQEEQHQRELSLLRKRLEELETTQRKQLEELGS. Phosphoserine is present on serine 698.

Belongs to the CEP83 family. Interacts with CEP164 and IFT20.

It localises to the cytoplasm. The protein resides in the cytoskeleton. The protein localises to the microtubule organizing center. Its subcellular location is the centrosome. It is found in the centriole. Component of the distal appendage region of the centriole involved in the initiation of primary cilium assembly. May collaborate with IFT20 in the trafficking of ciliary membrane proteins from the Golgi complex to the cilium during the initiation of primary cilium assembly. The sequence is that of Centrosomal protein of 83 kDa (CEP83) from Homo sapiens (Human).